We begin with the raw amino-acid sequence, 436 residues long: GTPase Der (436 aa).

EngA-type G domains lie at 4-167 (PTVA…PVEE) and 175-351 (IRFS…ESQN). Residues 10-17 (GRPNVGKS), 57-61 (DTGGI), 119-122 (NKVD), 181-188 (GRPNVGKS), 229-233 (DTAGM), and 294-297 (NKWD) each bind GTP. One can recognise a KH-like domain in the interval 352-436 (KRIPSAVLND…PINLIARKRK (85 aa)).

Belongs to the TRAFAC class TrmE-Era-EngA-EngB-Septin-like GTPase superfamily. EngA (Der) GTPase family. Associates with the 50S ribosomal subunit.

Its function is as follows. GTPase that plays an essential role in the late steps of ribosome biogenesis. In Streptococcus agalactiae serotype III (strain NEM316), this protein is GTPase Der.